We begin with the raw amino-acid sequence, 239 residues long: Ribitol-5-phosphate cytidylyltransferase (239 aa).

CTP contacts are provided by residues 7–10 (FAGG) and 80–86 (GETGQMS).

This sequence belongs to the IspD/TarI cytidylyltransferase family. TarI subfamily.

It carries out the reaction D-ribitol 5-phosphate + CTP + H(+) = CDP-L-ribitol + diphosphate. Its pathway is cell wall biogenesis; poly(ribitol phosphate) teichoic acid biosynthesis. Its function is as follows. Catalyzes the transfer of the cytidylyl group of CTP to D-ribitol 5-phosphate. This Streptococcus agalactiae serotype III (strain NEM316) protein is Ribitol-5-phosphate cytidylyltransferase.